The primary structure comprises 174 residues: Large ribosomal subunit protein uL10 (174 aa).

This sequence belongs to the universal ribosomal protein uL10 family. In terms of assembly, part of the ribosomal stalk of the 50S ribosomal subunit. The N-terminus interacts with L11 and the large rRNA to form the base of the stalk. The C-terminus forms an elongated spine to which L12 dimers bind in a sequential fashion forming a multimeric L10(L12)X complex.

Functionally, forms part of the ribosomal stalk, playing a central role in the interaction of the ribosome with GTP-bound translation factors. This Geobacter metallireducens (strain ATCC 53774 / DSM 7210 / GS-15) protein is Large ribosomal subunit protein uL10.